Consider the following 182-residue polypeptide: Adenylate kinase (182 aa).

Position 12-17 (12-17 (GAGKGT)) interacts with ATP. The interval 32–61 (STGDLLRAEVGAKTPLGQEAAAVMNRGELV) is NMP. Residues Thr33, Arg38, 59 to 61 (ELV), 85 to 88 (GFPR), and Gln92 each bind AMP. Residues 126–132 (SRGRSDD) are LID. Arg127 serves as a coordination point for ATP. 2 residues coordinate AMP: Arg129 and Arg140. Position 168 (Gly168) interacts with ATP.

It belongs to the adenylate kinase family. Monomer.

It is found in the cytoplasm. The catalysed reaction is AMP + ATP = 2 ADP. It functions in the pathway purine metabolism; AMP biosynthesis via salvage pathway; AMP from ADP: step 1/1. Functionally, catalyzes the reversible transfer of the terminal phosphate group between ATP and AMP. Plays an important role in cellular energy homeostasis and in adenine nucleotide metabolism. This is Adenylate kinase from Prochlorococcus marinus (strain MIT 9303).